A 413-amino-acid polypeptide reads, in one-letter code: Multifunctional CCA protein (413 aa).

Positions 8 and 11 each coordinate ATP. CTP is bound by residues Gly-8 and Arg-11. Residues Asp-21 and Asp-23 each contribute to the Mg(2+) site. Arg-91, Arg-137, and Arg-140 together coordinate ATP. CTP is bound by residues Arg-91, Arg-137, and Arg-140. The HD domain maps to 228-329 (TGLHTLMTVT…VKLFDSIDAW (102 aa)).

It belongs to the tRNA nucleotidyltransferase/poly(A) polymerase family. Bacterial CCA-adding enzyme type 1 subfamily. Monomer. Can also form homodimers and oligomers. Mg(2+) serves as cofactor. Ni(2+) is required as a cofactor.

It carries out the reaction a tRNA precursor + 2 CTP + ATP = a tRNA with a 3' CCA end + 3 diphosphate. The enzyme catalyses a tRNA with a 3' CCA end + 2 CTP + ATP = a tRNA with a 3' CCACCA end + 3 diphosphate. Catalyzes the addition and repair of the essential 3'-terminal CCA sequence in tRNAs without using a nucleic acid template. Adds these three nucleotides in the order of C, C, and A to the tRNA nucleotide-73, using CTP and ATP as substrates and producing inorganic pyrophosphate. tRNA 3'-terminal CCA addition is required both for tRNA processing and repair. Also involved in tRNA surveillance by mediating tandem CCA addition to generate a CCACCA at the 3' terminus of unstable tRNAs. While stable tRNAs receive only 3'-terminal CCA, unstable tRNAs are marked with CCACCA and rapidly degraded. The chain is Multifunctional CCA protein from Klebsiella pneumoniae (strain 342).